The following is a 117-amino-acid chain: Large ribosomal subunit protein bL20 (117 aa).

The protein belongs to the bacterial ribosomal protein bL20 family.

In terms of biological role, binds directly to 23S ribosomal RNA and is necessary for the in vitro assembly process of the 50S ribosomal subunit. It is not involved in the protein synthesizing functions of that subunit. The sequence is that of Large ribosomal subunit protein bL20 from Crocosphaera subtropica (strain ATCC 51142 / BH68) (Cyanothece sp. (strain ATCC 51142)).